The chain runs to 660 residues: Bifunctional polymyxin resistance protein ArnA (660 aa).

Residues M1–L304 form a formyltransferase ArnAFT region. H104 (proton donor; for formyltransferase activity) is an active-site residue. Residues R114 and V136–D140 each bind (6R)-10-formyltetrahydrofolate. A dehydrogenase ArnADH region spans residues R314 to E660. Residues D347 and D368–I369 each bind NAD(+). UDP-alpha-D-glucuronate contacts are provided by residues A393, Y398, and T432–S433. E434 functions as the Proton acceptor; for decarboxylase activity in the catalytic mechanism. UDP-alpha-D-glucuronate-binding positions include R460, N492, K526–R535, and Y613. R619 (proton donor; for decarboxylase activity) is an active-site residue.

It in the N-terminal section; belongs to the Fmt family. UDP-L-Ara4N formyltransferase subfamily. In the C-terminal section; belongs to the NAD(P)-dependent epimerase/dehydratase family. UDP-glucuronic acid decarboxylase subfamily. Homohexamer, formed by a dimer of trimers.

The enzyme catalyses UDP-alpha-D-glucuronate + NAD(+) = UDP-beta-L-threo-pentopyranos-4-ulose + CO2 + NADH. It catalyses the reaction UDP-4-amino-4-deoxy-beta-L-arabinose + (6R)-10-formyltetrahydrofolate = UDP-4-deoxy-4-formamido-beta-L-arabinose + (6S)-5,6,7,8-tetrahydrofolate + H(+). It participates in nucleotide-sugar biosynthesis; UDP-4-deoxy-4-formamido-beta-L-arabinose biosynthesis; UDP-4-deoxy-4-formamido-beta-L-arabinose from UDP-alpha-D-glucuronate: step 1/3. Its pathway is nucleotide-sugar biosynthesis; UDP-4-deoxy-4-formamido-beta-L-arabinose biosynthesis; UDP-4-deoxy-4-formamido-beta-L-arabinose from UDP-alpha-D-glucuronate: step 3/3. The protein operates within bacterial outer membrane biogenesis; lipopolysaccharide biosynthesis. Functionally, bifunctional enzyme that catalyzes the oxidative decarboxylation of UDP-glucuronic acid (UDP-GlcUA) to UDP-4-keto-arabinose (UDP-Ara4O) and the addition of a formyl group to UDP-4-amino-4-deoxy-L-arabinose (UDP-L-Ara4N) to form UDP-L-4-formamido-arabinose (UDP-L-Ara4FN). The modified arabinose is attached to lipid A and is required for resistance to polymyxin and cationic antimicrobial peptides. This is Bifunctional polymyxin resistance protein ArnA from Erwinia tasmaniensis (strain DSM 17950 / CFBP 7177 / CIP 109463 / NCPPB 4357 / Et1/99).